Reading from the N-terminus, the 426-residue chain is 5-methylthioadenosine/S-adenosylhomocysteine deaminase (426 aa).

Residues H60 and H62 each contribute to the Zn(2+) site. 2 residues coordinate substrate: E89 and H179. Position 206 (H206) interacts with Zn(2+). Positions 209 and 294 each coordinate substrate. A Zn(2+)-binding site is contributed by D294.

The protein belongs to the metallo-dependent hydrolases superfamily. MTA/SAH deaminase family. Requires Zn(2+) as cofactor.

It catalyses the reaction S-adenosyl-L-homocysteine + H2O + H(+) = S-inosyl-L-homocysteine + NH4(+). The enzyme catalyses S-methyl-5'-thioadenosine + H2O + H(+) = S-methyl-5'-thioinosine + NH4(+). Its function is as follows. Catalyzes the deamination of 5-methylthioadenosine and S-adenosyl-L-homocysteine into 5-methylthioinosine and S-inosyl-L-homocysteine, respectively. Is also able to deaminate adenosine. This chain is 5-methylthioadenosine/S-adenosylhomocysteine deaminase, found in Dictyoglomus thermophilum (strain ATCC 35947 / DSM 3960 / H-6-12).